The chain runs to 344 residues: Anthranilate phosphoribosyltransferase (344 aa).

Residues glycine 85, glycine 88 to aspartate 89, threonine 93, asparagine 95 to threonine 98, lysine 113 to serine 121, and serine 125 contribute to the 5-phospho-alpha-D-ribose 1-diphosphate site. Glycine 85 contributes to the anthranilate binding site. Serine 97 is a binding site for Mg(2+). Asparagine 116 is an anthranilate binding site. An anthranilate-binding site is contributed by arginine 171. Residues aspartate 229 and glutamate 230 each coordinate Mg(2+).

It belongs to the anthranilate phosphoribosyltransferase family. Homodimer. Mg(2+) is required as a cofactor.

It carries out the reaction N-(5-phospho-beta-D-ribosyl)anthranilate + diphosphate = 5-phospho-alpha-D-ribose 1-diphosphate + anthranilate. Its pathway is amino-acid biosynthesis; L-tryptophan biosynthesis; L-tryptophan from chorismate: step 2/5. Its function is as follows. Catalyzes the transfer of the phosphoribosyl group of 5-phosphorylribose-1-pyrophosphate (PRPP) to anthranilate to yield N-(5'-phosphoribosyl)-anthranilate (PRA). The polypeptide is Anthranilate phosphoribosyltransferase (Shewanella amazonensis (strain ATCC BAA-1098 / SB2B)).